Here is a 372-residue protein sequence, read N- to C-terminus: Glutamate 5-kinase (372 aa).

K14 is an ATP binding site. Positions 54, 141, and 153 each coordinate substrate. Residue 173–174 (TD) participates in ATP binding. The PUA domain occupies 280–358 (RGRVVIDGGA…SEIESVLGHL (79 aa)).

This sequence belongs to the glutamate 5-kinase family.

The protein localises to the cytoplasm. It catalyses the reaction L-glutamate + ATP = L-glutamyl 5-phosphate + ADP. Its pathway is amino-acid biosynthesis; L-proline biosynthesis; L-glutamate 5-semialdehyde from L-glutamate: step 1/2. Functionally, catalyzes the transfer of a phosphate group to glutamate to form L-glutamate 5-phosphate. The protein is Glutamate 5-kinase of Cupriavidus taiwanensis (strain DSM 17343 / BCRC 17206 / CCUG 44338 / CIP 107171 / LMG 19424 / R1) (Ralstonia taiwanensis (strain LMG 19424)).